Consider the following 569-residue polypeptide: Protein germ cell-less (569 aa).

A disordered region spans residues 17-43 (SNRRKRKRSTDSSLGKDDPAQLDTTQP). The region spanning 66-136 (SDVAVMALDK…MYSDEIEIES (71 aa)) is the BTB domain. Residues 517-553 (GANSDRPLSPSSADDSAVFIGDSEPSTPSSPAPRPRI) form a disordered region.

It is found in the cytoplasm. Required for the specification of pole cells and germ cell formation. Mothers with reduced glc function give rise to sterile adult progeny that lack germ cells. In Drosophila melanogaster (Fruit fly), this protein is Protein germ cell-less (gcl).